The primary structure comprises 255 residues: MSQPLLAVNGLMMRFGGLLAVNNVSLELREREIVSLIGPNGAGKTTVFNCLTGFYKPTGGTITLRERHLEGLPGQQIARMGVVRTFQHVRLFREMTVIENLLVAQHQQLKTGLFSGLLKTPAFRRAQSEALDRAATWLERIGLLEHANRQASNLAYGDQRRLEIARCMVTQPEILMLDEPAAGLNPKETKELDELIAELRNHHNTTILLIEHDMKLVMGISDRIYVVNQGTPLANGTPEEIRNNPDVIRAYLGEA.

Residues 6–254 (LAVNGLMMRF…PDVIRAYLGE (249 aa)) enclose the ABC transporter domain. 38 to 45 (GPNGAGKT) contacts ATP.

Belongs to the ABC transporter superfamily.

In terms of biological role, component of the high-affinity branched-chain amino acid transport system. The chain is High-affinity branched-chain amino acid transport ATP-binding protein LivG (livG) from Salmonella typhi.